Reading from the N-terminus, the 616-residue chain is Chaperone protein HscA (616 aa).

It belongs to the heat shock protein 70 family.

In terms of biological role, chaperone involved in the maturation of iron-sulfur cluster-containing proteins. Has a low intrinsic ATPase activity which is markedly stimulated by HscB. Involved in the maturation of IscU. In Salmonella typhimurium (strain LT2 / SGSC1412 / ATCC 700720), this protein is Chaperone protein HscA.